Reading from the N-terminus, the 533-residue chain is GMP synthase [glutamine-hydrolyzing] (533 aa).

Residues 25–215 enclose the Glutamine amidotransferase type-1 domain; sequence SIVIFDFGSQ…VFNICKCHAN (191 aa). The Nucleophile role is filled by cysteine 102. Residues histidine 189 and glutamate 191 contribute to the active site. The 193-residue stretch at 216–408 folds into the GMPS ATP-PPase domain; the sequence is WTMGNYIQES…LGLPDEMIWR (193 aa). 243 to 249 provides a ligand contact to ATP; sequence SGGVDSA.

In terms of assembly, homodimer.

It catalyses the reaction XMP + L-glutamine + ATP + H2O = GMP + L-glutamate + AMP + diphosphate + 2 H(+). It functions in the pathway purine metabolism; GMP biosynthesis; GMP from XMP (L-Gln route): step 1/1. Its function is as follows. Catalyzes the synthesis of GMP from XMP. In Dehalococcoides mccartyi (strain CBDB1), this protein is GMP synthase [glutamine-hydrolyzing].